Consider the following 253-residue polypeptide: Imidazole glycerol phosphate synthase subunit HisF (253 aa).

Active-site residues include aspartate 11 and aspartate 130.

Belongs to the HisA/HisF family. Heterodimer of HisH and HisF.

It localises to the cytoplasm. The enzyme catalyses 5-[(5-phospho-1-deoxy-D-ribulos-1-ylimino)methylamino]-1-(5-phospho-beta-D-ribosyl)imidazole-4-carboxamide + L-glutamine = D-erythro-1-(imidazol-4-yl)glycerol 3-phosphate + 5-amino-1-(5-phospho-beta-D-ribosyl)imidazole-4-carboxamide + L-glutamate + H(+). It functions in the pathway amino-acid biosynthesis; L-histidine biosynthesis; L-histidine from 5-phospho-alpha-D-ribose 1-diphosphate: step 5/9. IGPS catalyzes the conversion of PRFAR and glutamine to IGP, AICAR and glutamate. The HisF subunit catalyzes the cyclization activity that produces IGP and AICAR from PRFAR using the ammonia provided by the HisH subunit. The polypeptide is Imidazole glycerol phosphate synthase subunit HisF (Geobacter sulfurreducens (strain ATCC 51573 / DSM 12127 / PCA)).